The chain runs to 369 residues: MSRSIRNQDVPELPRRRQVRTVGMSGNYWYVVEIDGRLKPRQVKRVRFWGQDIALFRDAAGELHAVEDRCPHRQLPLSQGFVEGGNLVCTYHGWKFDGCGRCTEIHHELGKGRTRLPRIRIRTYPVKAQWGLIWLFPGDPALADGTPLPTIPQLEGGRPWPFFPIDVTIKAHFSMIVENVCDFNHEYLHRHKRPFLQPILREWKQDADSVRVYYDTRFDGSPVAKLFMEGGARDLNEIEIWYQYPYQGSDIGGKYIHWLFMLPEDERTTRCFFVFLFGPIHVPIVNWKMPEFLRKPILWFTNKWYIEPLLGEDKWALELEQDGFERHPDAPQIELNPAISSFQRLSLEKWKAYQQSMERAGPKPAADPA.

Positions 29 to 135 (WYVVEIDGRL…VKAQWGLIWL (107 aa)) constitute a Rieske domain. [2Fe-2S] cluster contacts are provided by cysteine 70, histidine 72, cysteine 89, and histidine 92.

It depends on [2Fe-2S] cluster as a cofactor.

It catalyses the reaction a 3beta-hydroxy-4,4-dimethylsteroid + 3 NADH + 3 O2 + 2 H(+) = a 3beta-hydroxy-4alpha-methylsteroid-4beta-carboxylate + 3 NAD(+) + 4 H2O. The catalysed reaction is 4,4-dimethyl-5alpha-cholesta-8,24-dien-3beta-ol + 3 NADH + 3 O2 + 2 H(+) = 4beta-carboxy-4alpha-methyl-5alpha-cholesta-8,24-dien-3beta-ol + 3 NAD(+) + 4 H2O. The enzyme catalyses a 3beta-hydroxy-4,4-dimethylsteroid + NADH + O2 + H(+) = a 3beta-hydroxy-4beta-hydroxymethyl-4alpha-methylsteroid + NAD(+) + H2O. It carries out the reaction a 3beta-hydroxy-4beta-hydroxymethyl-4alpha-methylsteroid + NADH + O2 + H(+) = a 3beta-hydroxy-4beta-formyl-4alpha-methylsteroid + NAD(+) + 2 H2O. It catalyses the reaction a 3beta-hydroxy-4beta-formyl-4alpha-methylsteroid + NADH + O2 = a 3beta-hydroxy-4alpha-methylsteroid-4beta-carboxylate + NAD(+) + H2O. The catalysed reaction is 4,4-dimethyl-5alpha-cholesta-8,24-dien-3beta-ol + NADH + O2 + H(+) = 4beta-hydroxymethyl-4alpha-methylzymosterol + NAD(+) + H2O. The enzyme catalyses 4beta-hydroxymethyl-4alpha-methylzymosterol + NADH + O2 + H(+) = 4beta-formylmethyl-4alpha-methyl-5alpha-cholesta-8,24-dien-3beta-ol + NAD(+) + 2 H2O. It carries out the reaction 4beta-formylmethyl-4alpha-methyl-5alpha-cholesta-8,24-dien-3beta-ol + NADH + O2 = 4beta-carboxy-4alpha-methyl-5alpha-cholesta-8,24-dien-3beta-ol + NAD(+) + H2O. The protein operates within steroid biosynthesis; sterol biosynthesis. Participates in the biosynthesis of bacterial sterols. Together with SdmB, removes one methyl group from the C-4 position of 4,4-dimethylated steroid molecules. SdmA oxidizes the sterol 4beta-methyl group into first a hydroxyl, then an aldehyde and finally a carboxylic acid group. This chain is 4beta-methylsterol monooxygenase, found in Methylococcus capsulatus (strain ATCC 33009 / NCIMB 11132 / Bath).